The sequence spans 257 residues: Isoprenyl transferase (257 aa).

Aspartate 33 is a catalytic residue. Aspartate 33 contributes to the Mg(2+) binding site. Substrate is bound by residues 34–37 (GNGR), tryptophan 38, arginine 46, histidine 50, and 78–80 (STE). The active-site Proton acceptor is asparagine 81. Substrate contacts are provided by residues tryptophan 82, arginine 84, arginine 204, and 210–212 (RLS). Residue glutamate 223 coordinates Mg(2+).

This sequence belongs to the UPP synthase family. In terms of assembly, homodimer. The cofactor is Mg(2+).

In terms of biological role, catalyzes the condensation of isopentenyl diphosphate (IPP) with allylic pyrophosphates generating different type of terpenoids. This is Isoprenyl transferase from Clostridium acetobutylicum (strain ATCC 824 / DSM 792 / JCM 1419 / IAM 19013 / LMG 5710 / NBRC 13948 / NRRL B-527 / VKM B-1787 / 2291 / W).